The following is a 337-amino-acid chain: Transcription initiation factor IIB (337 aa).

The TFIIB-type zinc finger occupies 36–68; sequence SVQSVCPECGSRQLVHDYERAELVCQNCGLVLD. Positions 41, 44, 60, and 63 each coordinate Zn(2+). Tandem repeats lie at residues 154-237 and 248-329.

It belongs to the TFIIB family.

Its function is as follows. Stabilizes TBP binding to an archaeal box-A promoter. Also responsible for recruiting RNA polymerase II to the pre-initiation complex (DNA-TBP-TFIIB). The polypeptide is Transcription initiation factor IIB (Methanoculleus marisnigri (strain ATCC 35101 / DSM 1498 / JR1)).